A 297-amino-acid chain; its full sequence is 4-hydroxy-tetrahydrodipicolinate synthase (297 aa).

Residue threonine 50 coordinates pyruvate. Tyrosine 138 acts as the Proton donor/acceptor in catalysis. Residue lysine 166 is the Schiff-base intermediate with substrate of the active site. Residue isoleucine 208 participates in pyruvate binding.

It belongs to the DapA family. As to quaternary structure, homotetramer; dimer of dimers.

Its subcellular location is the cytoplasm. The enzyme catalyses L-aspartate 4-semialdehyde + pyruvate = (2S,4S)-4-hydroxy-2,3,4,5-tetrahydrodipicolinate + H2O + H(+). It participates in amino-acid biosynthesis; L-lysine biosynthesis via DAP pathway; (S)-tetrahydrodipicolinate from L-aspartate: step 3/4. Catalyzes the condensation of (S)-aspartate-beta-semialdehyde [(S)-ASA] and pyruvate to 4-hydroxy-tetrahydrodipicolinate (HTPA). This is 4-hydroxy-tetrahydrodipicolinate synthase from Gluconobacter oxydans (strain 621H) (Gluconobacter suboxydans).